A 338-amino-acid chain; its full sequence is MSNNDLLNYYHRANELVFKGLIEFSCMKAAIELDLFSHMAEGPKDLATLAADTGSVPPRLEMLLETLRQMRVINLEDGKWSLTEFADYMFSPTPKEPNLHQTPVAKAMAFLADDFYMGLSQAVRGQKNFKGQVPYPPVTREDNLYFEEIHRSNAKFAIQLLLEEAKLDGVKKMIDVGGGIGDISAAMLKHFPELDSTILNLPGAIDLVNENAAEKGVADRMRGIAVDIYKESYPEADAVLFCRILYSANEQLSTIMCKKAFDAMRSGGRLLILDMVIDDPENPNFDYLSHYILGAGMPFSVLGFKEQARYKEILESLGYKDVTMVRKYDHLLVQAVKP.

An S-adenosyl-L-methionine-binding site is contributed by Glu-147. His-150 lines the substrate pocket. Residues Gly-177, Asn-200, Asp-227 to Ile-228, and Cys-242 to Arg-243 each bind S-adenosyl-L-methionine. Tyr-246 functions as the Nucleophile in the catalytic mechanism. An a bacteriochlorophyll d-binding site is contributed by His-290.

Belongs to the class I-like SAM-binding methyltransferase superfamily. Cation-independent O-methyltransferase family. Homodimer.

It carries out the reaction a bacteriochlorophyllide d + S-adenosyl-L-methionine = a bacteriochlorophyllide c + S-adenosyl-L-homocysteine + H(+). It participates in porphyrin-containing compound metabolism; bacteriochlorophyll biosynthesis (light-independent). Its function is as follows. Involved in the biosynthesis of the major light-harvesting pigment bacteriochlorophyll c (BChlc), which confers a significant competitive advantage to green sulfur bacteria living at limiting red and near-infrared light intensities. Catalyzes the methylation at the C-20 position of the cyclic tetrapyrrole chlorin of bacteriochlorophyll d (BChld) to produce bacteriochlorophyll c (BChlc) using S-adenosylmethionine (SAM) as a methyl source. This is Bacteriochlorophyllide d C-20 methyltransferase from Chlorobaculum tepidum (strain ATCC 49652 / DSM 12025 / NBRC 103806 / TLS) (Chlorobium tepidum).